The primary structure comprises 565 residues: DNA-directed RNA polymerase subunit beta C-terminal section (565 aa).

The protein belongs to the RNA polymerase beta chain family. In plastids the minimal PEP RNA polymerase catalytic core is composed of four subunits: alpha, beta, beta', and beta''. When a (nuclear-encoded) sigma factor is associated with the core the holoenzyme is formed, which can initiate transcription.

The protein resides in the plastid. It localises to the chloroplast. It carries out the reaction RNA(n) + a ribonucleoside 5'-triphosphate = RNA(n+1) + diphosphate. Functionally, DNA-dependent RNA polymerase catalyzes the transcription of DNA into RNA using the four ribonucleoside triphosphates as substrates. The protein is DNA-directed RNA polymerase subunit beta C-terminal section (rpoB2) of Tetradesmus obliquus (Green alga).